Reading from the N-terminus, the 39-residue chain is uncharacterized protein (39 aa).

Over residues 1 to 16 (MLNIQPTQSIVNNQPK) the composition is skewed to polar residues. The interval 1-39 (MLNIQPTQSIVNNQPKSDQKKQKPADLLKEFYDKTGNRN) is disordered. The segment covering 17-39 (SDQKKQKPADLLKEFYDKTGNRN) has biased composition (basic and acidic residues).

This is an uncharacterized protein from Dictyostelium discoideum (Social amoeba).